We begin with the raw amino-acid sequence, 224 residues long: Putative adhesin A1G_07050 (224 aa).

The N-terminal stretch at M1 to A22 is a signal peptide.

The protein is Putative adhesin A1G_07050 of Rickettsia rickettsii (strain Sheila Smith).